We begin with the raw amino-acid sequence, 221 residues long: Thiamine-phosphate synthase (221 aa).

4-amino-2-methyl-5-(diphosphooxymethyl)pyrimidine contacts are provided by residues 46-50 and N82; that span reads QFREK. D83 and D102 together coordinate Mg(2+). S121 serves as a coordination point for 4-amino-2-methyl-5-(diphosphooxymethyl)pyrimidine. 148–150 provides a ligand contact to 2-[(2R,5Z)-2-carboxy-4-methylthiazol-5(2H)-ylidene]ethyl phosphate; that stretch reads TQS. Residue K151 coordinates 4-amino-2-methyl-5-(diphosphooxymethyl)pyrimidine. Residues G180 and 200–201 each bind 2-[(2R,5Z)-2-carboxy-4-methylthiazol-5(2H)-ylidene]ethyl phosphate; that span reads IS.

Belongs to the thiamine-phosphate synthase family. Requires Mg(2+) as cofactor.

It carries out the reaction 2-[(2R,5Z)-2-carboxy-4-methylthiazol-5(2H)-ylidene]ethyl phosphate + 4-amino-2-methyl-5-(diphosphooxymethyl)pyrimidine + 2 H(+) = thiamine phosphate + CO2 + diphosphate. It catalyses the reaction 2-(2-carboxy-4-methylthiazol-5-yl)ethyl phosphate + 4-amino-2-methyl-5-(diphosphooxymethyl)pyrimidine + 2 H(+) = thiamine phosphate + CO2 + diphosphate. The catalysed reaction is 4-methyl-5-(2-phosphooxyethyl)-thiazole + 4-amino-2-methyl-5-(diphosphooxymethyl)pyrimidine + H(+) = thiamine phosphate + diphosphate. The protein operates within cofactor biosynthesis; thiamine diphosphate biosynthesis; thiamine phosphate from 4-amino-2-methyl-5-diphosphomethylpyrimidine and 4-methyl-5-(2-phosphoethyl)-thiazole: step 1/1. Condenses 4-methyl-5-(beta-hydroxyethyl)thiazole monophosphate (THZ-P) and 2-methyl-4-amino-5-hydroxymethyl pyrimidine pyrophosphate (HMP-PP) to form thiamine monophosphate (TMP). This is Thiamine-phosphate synthase from Pasteurella multocida (strain Pm70).